The following is a 432-amino-acid chain: Amino-acid acetyltransferase (432 aa).

One can recognise an N-acetyltransferase domain in the interval 286–425 (ESLREATIED…ASLYNYQRNS (140 aa)).

This sequence belongs to the acetyltransferase family. ArgA subfamily.

The protein resides in the cytoplasm. It catalyses the reaction L-glutamate + acetyl-CoA = N-acetyl-L-glutamate + CoA + H(+). It functions in the pathway amino-acid biosynthesis; L-arginine biosynthesis; N(2)-acetyl-L-ornithine from L-glutamate: step 1/4. This is Amino-acid acetyltransferase from Ectopseudomonas mendocina (strain ymp) (Pseudomonas mendocina).